Consider the following 451-residue polypeptide: Serine--tRNA ligase (451 aa).

258–260 (TSE) provides a ligand contact to L-serine. Residue 289 to 291 (RSE) participates in ATP binding. Residue Glu-312 coordinates L-serine. 376–379 (EISS) lines the ATP pocket. Ser-411 serves as a coordination point for L-serine.

Belongs to the class-II aminoacyl-tRNA synthetase family. Type-1 seryl-tRNA synthetase subfamily. In terms of assembly, homodimer. The tRNA molecule binds across the dimer.

The protein localises to the cytoplasm. The enzyme catalyses tRNA(Ser) + L-serine + ATP = L-seryl-tRNA(Ser) + AMP + diphosphate + H(+). It carries out the reaction tRNA(Sec) + L-serine + ATP = L-seryl-tRNA(Sec) + AMP + diphosphate + H(+). It functions in the pathway aminoacyl-tRNA biosynthesis; selenocysteinyl-tRNA(Sec) biosynthesis; L-seryl-tRNA(Sec) from L-serine and tRNA(Sec): step 1/1. Catalyzes the attachment of serine to tRNA(Ser). Is also able to aminoacylate tRNA(Sec) with serine, to form the misacylated tRNA L-seryl-tRNA(Sec), which will be further converted into selenocysteinyl-tRNA(Sec). This is Serine--tRNA ligase from Bordetella pertussis (strain Tohama I / ATCC BAA-589 / NCTC 13251).